The chain runs to 359 residues: Guanine nucleotide-binding protein G(q) subunit alpha (359 aa).

2 S-palmitoyl cysteine lipidation sites follow: cysteine 9 and cysteine 10. The region spanning 38–359 (RELKLLLLGT…QLNLKEYNLV (322 aa)) is the G-alpha domain. Positions 41–54 (KLLLLGTGESGKST) are G1 motif. Positions 50, 51, 52, 53, 54, 156, 180, 181, and 183 each coordinate GTP. Mg(2+) is bound at residue serine 53. The tract at residues 178–186 (DVLRVRVPT) is G2 motif. Residue threonine 186 participates in Mg(2+) binding. The G3 motif stretch occupies residues 201–210 (FRMVDVGGQR). Glutamine 209 carries the 5-glutamyl histamine modification. A G4 motif region spans residues 270-277 (ILFLNKKD). Asparagine 274, lysine 275, aspartate 277, and alanine 331 together coordinate GTP. Positions 329 to 334 (TCATDT) are G5 motif.

Belongs to the G-alpha family. G(q) subfamily. G proteins are composed of 3 units; alpha, beta and gamma. The alpha chain contains the guanine nucleotide binding site. Interacts (GDP-bound form) with RIC8A (via C-terminus); promoting GNAQ folding and association with the plasma membrane. Binds NHERF1. Forms a complex with PECAM1 and BDKRB2. Interacts with GAS2L2. Post-translationally, palmitoylated by ZDHHC3 and ZDHHC7. Palmitoylation occurs in the Golgi and participates in the localization of GNAQ to the plasma membrane. Histaminylated at Gln-209 residues by TGM2.

It localises to the cell membrane. Its subcellular location is the golgi apparatus. The protein localises to the nucleus. It is found in the nucleus membrane. The catalysed reaction is GTP + H2O = GDP + phosphate + H(+). In terms of biological role, guanine nucleotide-binding proteins (G proteins) function as transducers downstream of G protein-coupled receptors (GPCRs) in numerous signaling cascades. The alpha chain contains the guanine nucleotide binding site and alternates between an active, GTP-bound state and an inactive, GDP-bound state. Signaling by an activated GPCR promotes GDP release and GTP binding. The alpha subunit has a low GTPase activity that converts bound GTP to GDP, thereby terminating the signal. Both GDP release and GTP hydrolysis are modulated by numerous regulatory proteins. Signaling is mediated via phospholipase C-beta-dependent inositol lipid hydrolysis for signal propagation: activates phospholipase C-beta: following GPCR activation, GNAQ activates PLC-beta (PLCB1, PLCB2, PLCB3 or PLCB4), leading to production of diacylglycerol (DAG) and inositol 1,4,5-trisphosphate (IP3). Required for platelet activation. Regulates B-cell selection and survival and is required to prevent B-cell-dependent autoimmunity. Regulates chemotaxis of BM-derived neutrophils and dendritic cells (in vitro). Transduces FFAR4 signaling in response to long-chain fatty acids (LCFAs). Together with GNA11, required for heart development. This chain is Guanine nucleotide-binding protein G(q) subunit alpha (Gnaq), found in Mus musculus (Mouse).